We begin with the raw amino-acid sequence, 298 residues long: Probable mitochondrial 2-oxodicarboxylate carrier (298 aa).

Transmembrane regions (helical) follow at residues 6–26, 62–81, 105–125, 159–179, 203–223, and 267–287; these read IPFP…VLTL, HRLY…KRAL, ALSI…VVPF, ALYN…AGYF, LIAG…FDVI, and VLRL…VIEF. Solcar repeat units lie at residues 6 to 92, 102 to 188, and 197 to 287; these read IPFP…YSKL, SSPA…IRNS, and GEIR…VIEF.

This sequence belongs to the mitochondrial carrier (TC 2.A.29) family.

The protein localises to the mitochondrion inner membrane. Functionally, transports C5-C7 oxodicarboxylates across the inner membranes of mitochondria. In Schizosaccharomyces pombe (strain 972 / ATCC 24843) (Fission yeast), this protein is Probable mitochondrial 2-oxodicarboxylate carrier.